Here is a 291-residue protein sequence, read N- to C-terminus: m-AAA protease-interacting protein 1, mitochondrial (291 aa).

A mitochondrion-targeting transit peptide spans 1-96 (MALAARLLPL…SLPASPSRSY (96 aa)).

As to quaternary structure, interacts with AFG3L2. Interacts with SPG7. Interacts with SMDT1/EMRE (via the N-terminal transit peptide); interaction is direct and takes place before maturation of SMDT1/EMRE.

It localises to the mitochondrion matrix. Promotes sorting of SMDT1/EMRE in mitochondria by ensuring its maturation. Interacts with the transit peptide region of SMDT1/EMRE precursor protein in the mitochondrial matrix, leading to protect it against protein degradation by YME1L1, thereby ensuring SMDT1/EMRE maturation by the mitochondrial processing peptidase (PMPCA and PMPCB). This chain is m-AAA protease-interacting protein 1, mitochondrial, found in Mus musculus (Mouse).